Reading from the N-terminus, the 488-residue chain is Probable malate:quinone oxidoreductase (488 aa).

Belongs to the MQO family. Requires FAD as cofactor.

It carries out the reaction (S)-malate + a quinone = a quinol + oxaloacetate. It functions in the pathway carbohydrate metabolism; tricarboxylic acid cycle; oxaloacetate from (S)-malate (quinone route): step 1/1. The protein is Probable malate:quinone oxidoreductase of Neisseria meningitidis serogroup C (strain 053442).